The following is an 87-amino-acid chain: Neurotoxin LmNaTx64.1 (87 aa).

An N-terminal signal peptide occupies residues 1–18; sequence MKILFLIILTAFFIGVHC. An LCN-type CS-alpha/beta domain is found at 19–85; that stretch reads KHGYPIIRAG…TWSRATNKCK (67 aa). 4 disulfide bridges follow: C33–C84, C37–C58, C44–C65, and C48–C67. Residue C84 is modified to Cysteine amide.

Belongs to the long (4 C-C) scorpion toxin superfamily. Sodium channel inhibitor family. Beta subfamily. Expressed by the venom gland.

It is found in the secreted. Its function is as follows. Binds voltage-independently at site-4 of sodium channels (Nav) and shift the voltage of activation toward more negative potentials thereby affecting sodium channel activation and promoting spontaneous and repetitive firing. This chain is Neurotoxin LmNaTx64.1, found in Lychas mucronatus (Chinese swimming scorpion).